The primary structure comprises 480 residues: Type II methyltransferase M.NspV (480 aa).

It belongs to the methyltransferase superfamily.

In terms of biological role, a gamma subtype methylase that recognizes the double-stranded sequence 5'-TTCGAA-3', and methylates it on an unknown base to protect it against the NspV endonuclease. The chain is Type II methyltransferase M.NspV from Nostoc sp. (strain ATCC 29411 / PCC 7524).